Here is a 612-residue protein sequence, read N- to C-terminus: Dihydroxy-acid dehydratase (612 aa).

Mg(2+) is bound at residue aspartate 81. Cysteine 122 lines the [2Fe-2S] cluster pocket. The Mg(2+) site is built by aspartate 123 and lysine 124. At lysine 124 the chain carries N6-carboxylysine. [2Fe-2S] cluster is bound at residue cysteine 195. Position 492 (glutamate 492) interacts with Mg(2+). Residue serine 518 is the Proton acceptor of the active site.

The protein belongs to the IlvD/Edd family. As to quaternary structure, homodimer. [2Fe-2S] cluster is required as a cofactor. Mg(2+) serves as cofactor.

The catalysed reaction is (2R)-2,3-dihydroxy-3-methylbutanoate = 3-methyl-2-oxobutanoate + H2O. It catalyses the reaction (2R,3R)-2,3-dihydroxy-3-methylpentanoate = (S)-3-methyl-2-oxopentanoate + H2O. Its pathway is amino-acid biosynthesis; L-isoleucine biosynthesis; L-isoleucine from 2-oxobutanoate: step 3/4. The protein operates within amino-acid biosynthesis; L-valine biosynthesis; L-valine from pyruvate: step 3/4. Functions in the biosynthesis of branched-chain amino acids. Catalyzes the dehydration of (2R,3R)-2,3-dihydroxy-3-methylpentanoate (2,3-dihydroxy-3-methylvalerate) into 2-oxo-3-methylpentanoate (2-oxo-3-methylvalerate) and of (2R)-2,3-dihydroxy-3-methylbutanoate (2,3-dihydroxyisovalerate) into 2-oxo-3-methylbutanoate (2-oxoisovalerate), the penultimate precursor to L-isoleucine and L-valine, respectively. This is Dihydroxy-acid dehydratase from Kocuria rhizophila (strain ATCC 9341 / DSM 348 / NBRC 103217 / DC2201).